Here is a 410-residue protein sequence, read N- to C-terminus: Protein disulfide isomerase CRELD1 (410 aa).

An N-terminal signal peptide occupies residues 1–29; that stretch reads MGMSRRMFLTVYGSLWLLLLLSRPGVSKP. The Extracellular segment spans residues 30–352; it reads QLCQTCQNLV…GLFDDITDDE (323 aa). Positions 32–35 match the CXXC motif; that stretch reads CQTC. 4 cysteine pairs are disulfide-bonded: cysteine 32/cysteine 35, cysteine 141/cysteine 155, cysteine 149/cysteine 167, and cysteine 169/cysteine 178. The EGF-like 1 domain maps to 139–179; sequence LSCPGGTEKPCSGNGQCNGDGTRFGTGVCDCYTSYGGPVCM. FU repeat units follow at residues 194-243 and 254-301; these read HLVC…DHCK and SYEC…ELPK. Residues 264–267 carry the CXXC motif; the sequence is CIGC. Cystine bridges form between cysteine 264/cysteine 267, cysteine 295/cysteine 309, cysteine 302/cysteine 318, and cysteine 320/cysteine 331. Residues 291 to 332 enclose the EGF-like 2; calcium-binding domain; that stretch reads DVDECDSELPKCKGSHEECVNTEGSFTCVCEKDYSRIDGMCR. A helical transmembrane segment spans residues 353–373; it reads VVVLQQMFFGVVICALATLAA. Residue lysine 374 is a topological domain, cytoplasmic. Residues 375–395 form a helical membrane-spanning segment; the sequence is GDMVFTAIFIGAVAAMAGYWL. The Extracellular segment spans residues 396 to 410; sequence SEKGDRALDSFMKGR.

It belongs to the CRELD family.

It is found in the membrane. It catalyses the reaction Catalyzes the rearrangement of -S-S- bonds in proteins.. In terms of biological role, protein disulfide isomerase. Promotes the localization of acetylcholine receptors (AChRs) to the plasma membrane. The protein is Protein disulfide isomerase CRELD1 (creld1) of Xenopus tropicalis (Western clawed frog).